A 134-amino-acid chain; its full sequence is Ribosome-binding factor A (134 aa).

Belongs to the RbfA family. In terms of assembly, monomer. Binds 30S ribosomal subunits, but not 50S ribosomal subunits or 70S ribosomes.

Its subcellular location is the cytoplasm. Functionally, one of several proteins that assist in the late maturation steps of the functional core of the 30S ribosomal subunit. Associates with free 30S ribosomal subunits (but not with 30S subunits that are part of 70S ribosomes or polysomes). Required for efficient processing of 16S rRNA. May interact with the 5'-terminal helix region of 16S rRNA. In Psychrobacter cryohalolentis (strain ATCC BAA-1226 / DSM 17306 / VKM B-2378 / K5), this protein is Ribosome-binding factor A.